The primary structure comprises 54 residues: Hemolytic toxin (54 aa).

The interval Ala-3–Ala-12 is plays an important role in the hemolytic activity. Residues Gly-11–Ser-30 are N-terminal region.

This sequence belongs to the actinoporin family. Sea anemone subfamily. As to quaternary structure, octamer or nonamer in membranes. Monomer in the soluble state.

It localises to the secreted. Its subcellular location is the nematocyst. The protein resides in the target cell membrane. In terms of biological role, pore-forming protein that forms cations-selective hydrophilic pores of around 1 nm and causes cytolysis. Pore formation is a multi-step process that involves specific recognition of membrane sphingomyelin (but neither cholesterol nor phosphatidylcholine) using aromatic rich region and adjacent phosphocholine (POC) binding site, firm binding to the membrane (mainly driven by hydrophobic interactions) accompanied by the transfer of the N-terminal region to the lipid-water interface and finally pore formation after oligomerization of monomers. The chain is Hemolytic toxin from Heteractis magnifica (Magnificent sea anemone).